The primary structure comprises 197 residues: HTH-type transcriptional regulator BetI (197 aa).

In terms of domain architecture, HTH tetR-type spans 8 to 68 (PIRRQQLIEA…ATMGYIMSML (61 aa)). The H-T-H motif DNA-binding region spans 31–50 (SIALIARLAGVSNGIISHYF).

It functions in the pathway amine and polyamine biosynthesis; betaine biosynthesis via choline pathway [regulation]. Its function is as follows. Repressor involved in the biosynthesis of the osmoprotectant glycine betaine. It represses transcription of the choline transporter BetT and the genes of BetAB involved in the synthesis of glycine betaine. This Pseudomonas fluorescens (strain ATCC BAA-477 / NRRL B-23932 / Pf-5) protein is HTH-type transcriptional regulator BetI.